We begin with the raw amino-acid sequence, 341 residues long: uncharacterized protein (341 aa).

This is an uncharacterized protein from Treponema pallidum (strain Nichols).